A 340-amino-acid polypeptide reads, in one-letter code: E3 ubiquitin ligase BIG BROTHER-related (340 aa).

Disordered regions lie at residues 1–56 (MPME…GVGE) and 133–182 (YDED…GNSD). Residues 34-46 (NRQTGVVSDTGSG) show a composition bias toward polar residues. 2 stretches are compositionally biased toward acidic residues: residues 133–164 (YDED…EDGL) and 173–182 (DDQEDDGNSD). An RING-type; atypical zinc finger spans residues 288 to 329 (CVICRLDYEDDEDLILLPCKHSYHSECINNWLKINKVCPVCS).

Auto-ubiquitinated.

It catalyses the reaction S-ubiquitinyl-[E2 ubiquitin-conjugating enzyme]-L-cysteine + [acceptor protein]-L-lysine = [E2 ubiquitin-conjugating enzyme]-L-cysteine + N(6)-ubiquitinyl-[acceptor protein]-L-lysine.. It participates in protein modification; protein ubiquitination. Functionally, E3 ubiquitin-ligase probably involved in organ size regulation. The chain is E3 ubiquitin ligase BIG BROTHER-related (BBR) from Arabidopsis thaliana (Mouse-ear cress).